A 561-amino-acid chain; its full sequence is Arginine--tRNA ligase (561 aa).

Residues 129-139 carry the 'HIGH' region motif; the sequence is ANPTGPLHVGH.

Belongs to the class-I aminoacyl-tRNA synthetase family. Monomer.

The protein localises to the cytoplasm. The enzyme catalyses tRNA(Arg) + L-arginine + ATP = L-arginyl-tRNA(Arg) + AMP + diphosphate. This is Arginine--tRNA ligase from Bordetella avium (strain 197N).